A 403-amino-acid polypeptide reads, in one-letter code: Interferon-induced protein with tetratricopeptide repeats 3 (403 aa).

TPR repeat units follow at residues 94–127, 136–169, 172–206, and 241–274; these read LVTW…CQKF, PELE…KPKD, CSSG…NPQN, and TDVL…TVNN.

It belongs to the IFIT family. Component of an interferon-dependent multiprotein complex, at least composed of IFIT1, IFIT2 and IFIT3. Interacts with IFIT1 and IFIT2. Interacts (via N-terminus) with MAVS, TBK1, TRAF6 and RIGI. Interacts with COPS5.

The protein localises to the cytoplasm. It is found in the mitochondrion. IFN-induced antiviral protein which acts as an inhibitor of cellular as well as viral processes, cell migration, proliferation, signaling, and viral replication. Enhances MAVS-mediated host antiviral responses by serving as an adapter bridging TBK1 to MAVS which leads to the activation of TBK1 and phosphorylation of IRF3 and phosphorylated IRF3 translocates into nucleus to promote antiviral gene transcription. Exhibits an antiproliferative activity via the up-regulation of cell cycle negative regulators CDKN1A/p21 and CDKN1B/p27. Normally, CDKN1B/p27 turnover is regulated by COPS5, which binds CDKN1B/p27 in the nucleus and exports it to the cytoplasm for ubiquitin-dependent degradation. IFIT3 sequesters COPS5 in the cytoplasm, thereby increasing nuclear CDKN1B/p27 protein levels. Up-regulates CDKN1A/p21 by down-regulating MYC, a repressor of CDKN1A/p21. Can negatively regulate the apoptotic effects of IFIT2. The sequence is that of Interferon-induced protein with tetratricopeptide repeats 3 (Ifit3) from Mus musculus (Mouse).